The chain runs to 484 residues: Cysteine--tRNA ligase (484 aa).

C27 is a binding site for Zn(2+). Residues 29-39 (PTTYNYIHLGN) carry the 'HIGH' region motif. Residues C207, H232, and E236 each coordinate Zn(2+). The 'KMSKS' region signature appears at 264-268 (KMSKS). Residue K267 participates in ATP binding.

Belongs to the class-I aminoacyl-tRNA synthetase family. As to quaternary structure, monomer. It depends on Zn(2+) as a cofactor.

The protein localises to the cytoplasm. The catalysed reaction is tRNA(Cys) + L-cysteine + ATP = L-cysteinyl-tRNA(Cys) + AMP + diphosphate. The chain is Cysteine--tRNA ligase from Pelotomaculum thermopropionicum (strain DSM 13744 / JCM 10971 / SI).